Consider the following 281-residue polypeptide: Probable endonuclease 4 (281 aa).

Positions 78, 118, 149, 181, 184, 216, 229, 231, and 260 each coordinate Zn(2+).

The protein belongs to the AP endonuclease 2 family. The cofactor is Zn(2+).

The enzyme catalyses Endonucleolytic cleavage to 5'-phosphooligonucleotide end-products.. Functionally, endonuclease IV plays a role in DNA repair. It cleaves phosphodiester bonds at apurinic or apyrimidinic (AP) sites, generating a 3'-hydroxyl group and a 5'-terminal sugar phosphate. This Thermoplasma acidophilum (strain ATCC 25905 / DSM 1728 / JCM 9062 / NBRC 15155 / AMRC-C165) protein is Probable endonuclease 4.